Here is a 203-residue protein sequence, read N- to C-terminus: Small ribosomal subunit protein uS4c (203 aa).

A disordered region spans residues 15-42; sequence LGALPGLTSKRPRAGSDPRNQELSGNKS. The 62-residue stretch at 89–150 folds into the S4 RNA-binding domain; that stretch reads MRLDNILFRL…DQKSKAMIQN (62 aa).

It belongs to the universal ribosomal protein uS4 family. As to quaternary structure, part of the 30S ribosomal subunit. Contacts protein S5. The interaction surface between S4 and S5 is involved in control of translational fidelity.

Its subcellular location is the plastid. The protein localises to the chloroplast. In terms of biological role, one of the primary rRNA binding proteins, it binds directly to 16S rRNA where it nucleates assembly of the body of the 30S subunit. Its function is as follows. With S5 and S12 plays an important role in translational accuracy. This chain is Small ribosomal subunit protein uS4c (rps4), found in Oenothera elata subsp. hookeri (Hooker's evening primrose).